The following is a 531-amino-acid chain: GPI alpha-1,2-mannosyltransferase 3 (531 aa).

The N-linked (GlcNAc...) asparagine glycan is linked to asparagine 84. 3 helical membrane passes run 99 to 119 (GLRGFSYPLMFAAIYKVLYLL), 124 to 144 (VWFLIWIPRLAQAVLSGIADV), and 174 to 196 (YCATRTLTNTMEAVLSTFALYYY). Asparagine 204 is a glycosylation site (N-linked (GlcNAc...) asparagine). Helical transmembrane passes span 210–230 (LICVALAFLIRPTAVILWIPL), 249–269 (YLPIGILTLAASLTVDRIFFG), 303–323 (GVPVILCTHLPFFIHGCMVTP), 328–348 (ILLVAVAWTVLTYSALSHKEF), 350–370 (FIYPVLPVCMVFCGFSFSNLK), and 375–395 (AAVGFLVLSNLFPALYTGLIH). Residues asparagine 414 and asparagine 476 are each glycosylated (N-linked (GlcNAc...) asparagine).

Belongs to the glycosyltransferase 22 family. PIGB subfamily.

Its subcellular location is the endoplasmic reticulum membrane. It functions in the pathway glycolipid biosynthesis; glycosylphosphatidylinositol-anchor biosynthesis. Its function is as follows. Alpha-1,2-mannosyltransferase that catalyzes the transfer of the third mannose, via an alpha-1,2 bond, from a dolichol-phosphate-mannose (Dol-P-Man) to an alpha-D-Man-(1-&gt;6)-2-PEtn-alpha-D-Man-(1-&gt;4)-alpha-D-GlcN-(1-&gt;6)-(1-radyl,2-acyl-sn-glycero-3-phospho)-2-acyl-inositol intermediate to generate an alpha-D-Man-(1-&gt;2)-alpha-D-Man-(1-&gt;6)-2-PEtn-alpha-D-Man-(1-&gt;4)-alpha-D-GlcN-(1-&gt;6)-(1-radyl,2-acyl-sn-glycero-3-phospho)-2-acyl-inositol (also termed H6) and participates in the nineth step of the glycosylphosphatidylinositol-anchor biosynthesis. May also add the third mannose to an alpha-D-Man-(1-&gt;6)-alpha-D-Man-(1-&gt;4)-alpha-D-GlcN-(1-&gt;6)-(1-radyl,2-acyl-sn-glycero-3-phospho)-2-acyl-inositol (also termed H3) intermediate generating an alpha-D-Man-(1-&gt;2)-alpha-D-Man-(1-&gt;6)-alpha-D-Man-(1-&gt;4)-alpha-D-GlcN-(1-&gt;6)-(1-radyl,2-acyl-sn-glycero-3-phospho)-2-acyl-inositol (also termed H4). This Xenopus laevis (African clawed frog) protein is GPI alpha-1,2-mannosyltransferase 3.